A 441-amino-acid polypeptide reads, in one-letter code: Cytochrome P450 monooxygenase cpsC (441 aa).

A disordered region spans residues 175-195 (STTSQARKDETTATQQAGMEQ). The span at 186-195 (TATQQAGMEQ) shows a compositional bias: polar residues. Heme is bound at residue C377.

Belongs to the cytochrome P450 family. The cofactor is heme.

It catalyses the reaction campesine D + reduced [NADPH--hemoprotein reductase] + O2 = campesine G + oxidized [NADPH--hemoprotein reductase] + 2 H2O + H(+). It participates in alkaloid biosynthesis. Functionally, cytochrome P450 monooxygenase; part of the gene cluster that mediates the biosynthesis of campesine G, a dimeric indole piperazine alkaloid that shows good insecticidal activity Galleria mellonella. Within the pathway, cpsC catalyzes regioselective dehydrogenation reaction towards C2-N1 of the (2H)-indole ring of campesine D to yield the final product, campesine G. The non-canonical non-ribosomal peptide synthetase cpsA catalyzes the first steps of the pathway by producing L-tryptophanal and L-valinal from their respective amino-acids. These products condensate spontaneously to form trypyl-valyl pyrazine also known as didehydrocampesine A. The NmrA-like family domain-containing oxidoreductase cpsB is the next enzyme in cps pathway and reduces the unstable didehydrocampesine A to campesine A. The methyltransferase cpsF and the acetyltransferase cpsE both recognize N13 of piperazine ring to carry out methylation and acetylation of campesine A to produce campesine C and B, respectively. The cytochrome P450 monooxygenase cpsD then acts as a dimerase that catalyzes oxidative heterocoupling between campesine B and C to produce heterodimers with unexpected 6/5/6/6/6/6/5/6 eight-ring scaffold called campesine D. Finally,the cytochrome P450 monooxygenase cpsC is a regioselective dehydrogenase that catalyzes dehydrogenation reaction towards C2-N1 to produce campesine G. The chain is Cytochrome P450 monooxygenase cpsC from Aspergillus campestris (strain IBT 28561).